The following is a 185-amino-acid chain: Elongation factor P (185 aa).

Belongs to the elongation factor P family.

The protein localises to the cytoplasm. It functions in the pathway protein biosynthesis; polypeptide chain elongation. In terms of biological role, involved in peptide bond synthesis. Stimulates efficient translation and peptide-bond synthesis on native or reconstituted 70S ribosomes in vitro. Probably functions indirectly by altering the affinity of the ribosome for aminoacyl-tRNA, thus increasing their reactivity as acceptors for peptidyl transferase. The sequence is that of Elongation factor P from Bacillus cereus (strain G9842).